The sequence spans 120 residues: NAD(P)H-quinone oxidoreductase subunit 3, chloroplastic (120 aa).

Transmembrane regions (helical) follow at residues 10–30, 64–84, and 89–109; these read LWFF…ISEI, MFAL…PWAI, and LGIS…VGLV.

It belongs to the complex I subunit 3 family. NDH is composed of at least 16 different subunits, 5 of which are encoded in the nucleus.

It localises to the plastid. The protein localises to the chloroplast thylakoid membrane. It carries out the reaction a plastoquinone + NADH + (n+1) H(+)(in) = a plastoquinol + NAD(+) + n H(+)(out). The catalysed reaction is a plastoquinone + NADPH + (n+1) H(+)(in) = a plastoquinol + NADP(+) + n H(+)(out). In terms of biological role, NDH shuttles electrons from NAD(P)H:plastoquinone, via FMN and iron-sulfur (Fe-S) centers, to quinones in the photosynthetic chain and possibly in a chloroplast respiratory chain. The immediate electron acceptor for the enzyme in this species is believed to be plastoquinone. Couples the redox reaction to proton translocation, and thus conserves the redox energy in a proton gradient. The sequence is that of NAD(P)H-quinone oxidoreductase subunit 3, chloroplastic from Chara vulgaris (Common stonewort).